We begin with the raw amino-acid sequence, 251 residues long: Aquaporin TIP1-1 (251 aa).

Position 1 is an N-acetylmethionine (Met1). Residues 1–23 (MPIRNIAIGRPDEATRPDALKAA) lie on the Cytoplasmic side of the membrane. A helical transmembrane segment spans residues 24 to 44 (LAEFISTLIFVVAGSGSGMAF). At 45–56 (NKLTENGATTPS) the chain is on the vacuolar side. Residues 57–77 (GLVAAAVAHAFGLFVAVSVGA) form a helical membrane-spanning segment. The Cytoplasmic segment spans residues 78 to 103 (NISGGHVNPAVTFGAFIGGNITLLRG). Residues 85–87 (NPA) carry the NPA 1 motif. A helical membrane pass occupies residues 104 to 124 (ILYWIAQLLGSVVACLILKFA). Residues 125-143 (TGGLAVPAFGLSAGVGVLN) are Vacuolar-facing. The chain crosses the membrane as a helical span at residues 144-164 (AFVFEIVMTFGLVYTVYATAI). Residues 165-172 (DPKNGSLG) are Cytoplasmic-facing. Residues 173 to 193 (TIAPIAIGFIVGANILAGGAF) form a helical membrane-spanning segment. At 194–218 (SGASMNPAVAFGPAVVSWTWTNHWV) the chain is on the vacuolar side. An NPA 2 motif is present at residues 199–201 (NPA). The chain crosses the membrane as a helical span at residues 219 to 239 (YWAGPLVGGGIAGLIYEVFFI). The Cytoplasmic portion of the chain corresponds to 240–251 (NTTHEQLPTTDY).

Belongs to the MIP/aquaporin (TC 1.A.8) family. TIP (TC 1.A.8.10) subfamily. In terms of assembly, interacts with cucumber mosaic virus (CMV) Protein 1a. In terms of tissue distribution, in all the vegetative organs, but not in seeds. Preferentially expressed in roots.

It localises to the vacuole membrane. Functionally, water channel required to facilitate the transport of water, diffusion of amino acids and/or peptides from the vacuolar compartment to the cytoplasm. Does not promote glycerol permeability. May play a role in the control of cell turgor and cell expansion. Its function is impaired by Hg(2+). May be involved in a vesicle-based metabolite routing through or between pre-vacuolar compartments and the central vacuole. Transports urea in yeast cells in a pH-independent manner. Transports H(2)O(2) in yeast cells. The protein is Aquaporin TIP1-1 (TIP1-1) of Arabidopsis thaliana (Mouse-ear cress).